The primary structure comprises 262 residues: Putative BTB/POZ domain-containing protein L834 (262 aa).

The BTB domain maps to 16 to 86 (FDVVVELTDE…FYKKNIQPCI (71 aa)).

It belongs to the mimivirus BTB/WD family.

The protein is Putative BTB/POZ domain-containing protein L834 of Acanthamoeba polyphaga (Amoeba).